The following is a 103-amino-acid chain: Large ribosomal subunit protein bL21 (103 aa).

This sequence belongs to the bacterial ribosomal protein bL21 family. Part of the 50S ribosomal subunit. Contacts protein L20.

Its function is as follows. This protein binds to 23S rRNA in the presence of protein L20. The protein is Large ribosomal subunit protein bL21 of Chromobacterium violaceum (strain ATCC 12472 / DSM 30191 / JCM 1249 / CCUG 213 / NBRC 12614 / NCIMB 9131 / NCTC 9757 / MK).